The sequence spans 396 residues: Tyrosine--tRNA ligase (396 aa).

Residues 43–52 carry the 'HIGH' region motif; that stretch reads PTAPDIHLGH. A 'KMSKS' region motif is present at residues 227-231; the sequence is KMSKS. Lys230 is an ATP binding site. The S4 RNA-binding domain maps to 335–395; it reads IGLATLLKEA…GKRKFARVTV (61 aa).

Belongs to the class-I aminoacyl-tRNA synthetase family. TyrS type 2 subfamily. In terms of assembly, homodimer.

Its subcellular location is the cytoplasm. It carries out the reaction tRNA(Tyr) + L-tyrosine + ATP = L-tyrosyl-tRNA(Tyr) + AMP + diphosphate + H(+). Catalyzes the attachment of tyrosine to tRNA(Tyr) in a two-step reaction: tyrosine is first activated by ATP to form Tyr-AMP and then transferred to the acceptor end of tRNA(Tyr). In Haemophilus ducreyi (strain 35000HP / ATCC 700724), this protein is Tyrosine--tRNA ligase.